We begin with the raw amino-acid sequence, 313 residues long: WD repeat-containing protein 82 (313 aa).

WD repeat units follow at residues 19–58 (ENSD…PKRT), 105–144 (GHSK…CQGL), 146–184 (HLQG…KGPF), 192–231 (DRTC…VMHT), 236–276 (NNSK…KVAV), and 280–313 (KHTG…TIDD).

The protein belongs to the WD repeat SWD2 family. In terms of assembly, component of the SET1/COMPASS complex. Component of the PNUTS-PP1 phosphatase complex.

It is found in the nucleus. The protein resides in the chromosome. Its subcellular location is the cytoplasm. Its function is as follows. Regulatory component of the SET1/COMPASS complex implicated in the tethering of this complex to transcriptional start sites of active genes. Facilitates histone H3 'Lys-4' methylation (H3K4me) via recruitment of the SETD1A or SETD1B to the 'Ser-5' phosphorylated C-terminal domain (CTD) of RNA polymerase II large subunit (POLR2A). Component of the PNUTS-PP1 protein phosphatase complex, a protein phosphatase 1 (PP1) complex that promotes RNA polymerase II transcription pause-release, allowing transcription elongation. The polypeptide is WD repeat-containing protein 82 (wdr82) (Xenopus tropicalis (Western clawed frog)).